Consider the following 103-residue polypeptide: MLSDLYEEIKLRKTQPKEGSYTNYLFEKGLDKILKKVGEETTEVVIAAKNNNEELISEITDLTYHLLVLLAEKDIPLEDIKQELQSREGKLSKTSDRKEINDL.

The tract at residues 84–103 (LQSREGKLSKTSDRKEINDL) is disordered.

It belongs to the PRA-PH family.

It is found in the cytoplasm. It catalyses the reaction 1-(5-phospho-beta-D-ribosyl)-ATP + H2O = 1-(5-phospho-beta-D-ribosyl)-5'-AMP + diphosphate + H(+). It participates in amino-acid biosynthesis; L-histidine biosynthesis; L-histidine from 5-phospho-alpha-D-ribose 1-diphosphate: step 2/9. In Listeria innocua serovar 6a (strain ATCC BAA-680 / CLIP 11262), this protein is Phosphoribosyl-ATP pyrophosphatase (hisE).